The sequence spans 896 residues: Translation initiation factor IF-2 (896 aa).

Disordered stretches follow at residues 53-81 and 117-301; these read HGGESAPTKMTLQRKSVSTLSVGSGSASK and AEEA…ESMD. A compositionally biased stretch (polar residues) spans 60-79; sequence TKMTLQRKSVSTLSVGSGSA. The span at 117–227 shows a compositional bias: basic and acidic residues; the sequence is AEEAASKAKA…ESEKTGDHHV (111 aa). A compositionally biased stretch (low complexity) spans 254–266; that stretch reads ATPAPAAAPANTG. A compositionally biased stretch (basic and acidic residues) spans 273 to 282; sequence GKDNRRDSRN. Residues 283 to 294 show a composition bias toward low complexity; sequence ARGGRNARNNRS. The region spanning 394-563 is the tr-type G domain; sequence SRAPVVTIMG…LLEAEVLELK (170 aa). The interval 403 to 410 is G1; that stretch reads GHVDHGKT. Residue 403 to 410 coordinates GTP; sequence GHVDHGKT. Residues 428-432 are G2; sequence GITQH. Positions 449–452 are G3; sequence DTPG. GTP is bound by residues 449-453 and 503-506; these read DTPGH and NKID. The G4 stretch occupies residues 503–506; the sequence is NKID. A G5 region spans residues 539–541; the sequence is SAK.

The protein belongs to the TRAFAC class translation factor GTPase superfamily. Classic translation factor GTPase family. IF-2 subfamily.

The protein resides in the cytoplasm. Its function is as follows. One of the essential components for the initiation of protein synthesis. Protects formylmethionyl-tRNA from spontaneous hydrolysis and promotes its binding to the 30S ribosomal subunits. Also involved in the hydrolysis of GTP during the formation of the 70S ribosomal complex. The polypeptide is Translation initiation factor IF-2 (Shewanella sediminis (strain HAW-EB3)).